The sequence spans 226 residues: Thiopurine S-methyltransferase (226 aa).

S-adenosyl-L-methionine contacts are provided by W16, M51, E72, and R131.

This sequence belongs to the class I-like SAM-binding methyltransferase superfamily. TPMT family.

The protein resides in the cytoplasm. The enzyme catalyses S-adenosyl-L-methionine + a thiopurine = S-adenosyl-L-homocysteine + a thiopurine S-methylether.. The protein is Thiopurine S-methyltransferase of Francisella tularensis subsp. tularensis (strain SCHU S4 / Schu 4).